We begin with the raw amino-acid sequence, 124 residues long: Fluoride-specific ion channel FluC (124 aa).

A run of 4 helical transmembrane segments spans residues 5–25, 36–56, 70–90, and 100–120; these read LVVF…NLAA, TMII…WFAV, TGIL…FLLM, and LYVL…LAVI. Na(+) is bound by residues Gly-74 and Thr-77.

The protein belongs to the fluoride channel Fluc/FEX (TC 1.A.43) family.

It is found in the cell inner membrane. It carries out the reaction fluoride(in) = fluoride(out). With respect to regulation, na(+) is not transported, but it plays an essential structural role and its presence is essential for fluoride channel function. In terms of biological role, fluoride-specific ion channel. Important for reducing fluoride concentration in the cell, thus reducing its toxicity. This is Fluoride-specific ion channel FluC from Methylobacterium nodulans (strain LMG 21967 / CNCM I-2342 / ORS 2060).